A 122-amino-acid chain; its full sequence is Large ribosomal subunit protein uL18 (122 aa).

Belongs to the universal ribosomal protein uL18 family. Part of the 50S ribosomal subunit; part of the 5S rRNA/L5/L18/L25 subcomplex. Contacts the 5S and 23S rRNAs.

In terms of biological role, this is one of the proteins that bind and probably mediate the attachment of the 5S RNA into the large ribosomal subunit, where it forms part of the central protuberance. The chain is Large ribosomal subunit protein uL18 from Prochlorococcus marinus (strain MIT 9301).